Reading from the N-terminus, the 1502-residue chain is Heme-responsive zinc finger transcription factor HAP1 (1502 aa).

A compositionally biased stretch (polar residues) spans 1–50 (MSNTPYNSSVPSIASMTQSSVSRSPNMHTATTPGANTSSNSPPLHMSSDS). The disordered stretch occupies residues 1–56 (MSNTPYNSSVPSIASMTQSSVSRSPNMHTATTPGANTSSNSPPLHMSSDSSKIKRK). Residues Cys64, Cys67, Cys74, Cys81, Cys84, and Cys93 each coordinate Zn(2+). Residues 64–93 (CTICRKRKVKCDKLRPHCQQCTKTGVAHLC) constitute a DNA-binding region (zn(2)-C6 fungal-type). Residues 105-134 (EKELLKDNELKKLRERVKSLEKTLSKVHSS) adopt a coiled-coil conformation. The interval 126–208 (KTLSKVHSSP…ANSSSLSISN (83 aa)) is disordered. The segment covering 130–142 (KVHSSPSSNSLKS) has biased composition (low complexity). 2 stretches are compositionally biased toward polar residues: residues 143–152 (YNTPESSNLF) and 160–176 (TLVNANTGSASSASHMH). Low complexity predominate over residues 177-208 (QQQQQQQQQEQQQDFSRSANANANSSSLSISN). A heme-responsive; required for HMC formation region spans residues 244–444 (KGDPYLKLLW…NTIPHHQPQS (201 aa)). HRM repeat units follow at residues 280-285 (KCPINH), 299-304 (KCPVDH), 323-328 (KCPVDH), 347-352 (RCPVDH), 389-394 (KCPVDH), and 415-420 (RCPIDH). Composition is skewed to polar residues over residues 432-447 (STHNTIPHHQPQSGSH) and 706-734 (QLNATIPATSQDVSNNGSKKANPSTNPTL). Disordered regions lie at residues 432-458 (STHNTIPHHQPQSGSHARSHPAQSRKH) and 706-767 (QLNA…KENQ). Over residues 735-759 (NNNMSAATTNSSSRSGSADSRSGSN) the composition is skewed to low complexity. An HRM 7 repeat occupies 1192 to 1197 (KCPVYQ). Residues 1384–1411 (TANTDTSANGSALSTLTSPQGSDLASNS) form a disordered region. Residues 1388–1411 (DTSANGSALSTLTSPQGSDLASNS) are compositionally biased toward polar residues.

Binds DNA as a homodimer. Interacts with SRO9 and YDJ1. In the absence of heme, binds to at least four cellular proteins, including YDJ1 and SRO9, forming a high-molecular-weight complex (HMC) which results in repression of its activity and dictates its DNA-binding specificity.

It localises to the nucleus. Its function is as follows. Regulation of oxygen dependent gene expression. It modulates the expression of Iso-1 (CYP1) and Iso-2 (CYP3) cytochrome c. In response to heme, promotes transcription of genes encoding functions required for respiration, controlling oxidative damage and repression of anaerobic genes. Binds to the sequence 5'-CGGNNNTNNCGG-3'. Is non-functional in terms of iso-1 cytochrome c expression in strain S288c and its derivatives. In Saccharomyces cerevisiae (strain ATCC 204508 / S288c) (Baker's yeast), this protein is Heme-responsive zinc finger transcription factor HAP1 (HAP1).